Here is a 944-residue protein sequence, read N- to C-terminus: UvrABC system protein A (944 aa).

33–40 (GLSGSGKS) serves as a coordination point for ATP. The C4-type zinc finger occupies 252–279 (CPICGFSIGELEPRMFSFNSPFGACPTC). ABC transporter domains lie at 309-587 (WEPT…KKSL) and 607-935 (ITDR…QYLK). 639–646 (GVSGSGKS) contributes to the ATP binding site. Residues 738–764 (CEACKGDGIIKIEMHFLPDVYVPCEVC) form a C4-type zinc finger.

It belongs to the ABC transporter superfamily. UvrA family. Forms a heterotetramer with UvrB during the search for lesions.

Its subcellular location is the cytoplasm. In terms of biological role, the UvrABC repair system catalyzes the recognition and processing of DNA lesions. UvrA is an ATPase and a DNA-binding protein. A damage recognition complex composed of 2 UvrA and 2 UvrB subunits scans DNA for abnormalities. When the presence of a lesion has been verified by UvrB, the UvrA molecules dissociate. This chain is UvrABC system protein A, found in Staphylococcus epidermidis (strain ATCC 35984 / DSM 28319 / BCRC 17069 / CCUG 31568 / BM 3577 / RP62A).